Reading from the N-terminus, the 556-residue chain is MEQEARVLRAAGGFGRARRLLASASWVPCIVLGLVLSSEELLTAQPAPHCRPDPTLLPPALRALRGPALLDAAIPRLGPTRAPAEALGVLSPSYLAPLTRAPRPSSWASCSGAAAGPTWNLVCGDGWKVPLEQVSHLLGWLLGCVILGAGCDRFGRRAVFVASLVLTTGLGASEALAASFPTLLVLRLLHGGTLAGALLALYLARLELCDPPHRLAFSMGAGLFSVVGTLLLPGLAALVQDWRLLQGLGALMSGLLLLFWGFPALFPESPCWLLATGQVARARKILWRFAEASGVGPGDSSLEENSLATELTMLSARSPQPRYHSPLGLLRTRVTWRNGLILGFSSLVGGGIRASFRRSLAPQVPTFYLPYFLEAGLEAAALVFLLLTADCCGRRPVLLLGTMVTGLASLLLLAGAQYLPGWTVLFLSVLGLLASRAVSALSSLFAAEVFPTVIRGAGLGLVLGAGFLGQAAGPLDTLHGRQGFFLQQVVFASLAVLALLCVLLLPESRSRGLPQSLQDADRLRRSPLLRGRPRQDHLPLLPPSNSYWAGHTPEQH.

Residues 1–23 (MEQEARVLRAAGGFGRARRLLAS) lie on the Cytoplasmic side of the membrane. A helical transmembrane segment spans residues 24–44 (ASWVPCIVLGLVLSSEELLTA). Residues 45–128 (QPAPHCRPDP…WNLVCGDGWK (84 aa)) lie on the Extracellular side of the membrane. Residues 129 to 149 (VPLEQVSHLLGWLLGCVILGA) form a helical membrane-spanning segment. Over 150 to 157 (GCDRFGRR) the chain is Cytoplasmic. A helical transmembrane segment spans residues 158–178 (AVFVASLVLTTGLGASEALAA). Residues 179–182 (SFPT) lie on the Extracellular side of the membrane. A helical membrane pass occupies residues 183-203 (LLVLRLLHGGTLAGALLALYL). Residues 204–218 (ARLELCDPPHRLAFS) are Cytoplasmic-facing. The helical transmembrane segment at 219–239 (MGAGLFSVVGTLLLPGLAALV) threads the bilayer. The Extracellular portion of the chain corresponds to 240–246 (QDWRLLQ). A helical transmembrane segment spans residues 247–267 (GLGALMSGLLLLFWGFPALFP). At 268 to 339 (ESPCWLLATG…LRTRVTWRNG (72 aa)) the chain is on the cytoplasmic side. A helical membrane pass occupies residues 340–357 (LILGFSSLVGGGIRASFR). Topologically, residues 358 to 366 (RSLAPQVPT) are extracellular. Residues 367-387 (FYLPYFLEAGLEAAALVFLLL) traverse the membrane as a helical segment. Over 388 to 395 (TADCCGRR) the chain is Cytoplasmic. Residues 396–416 (PVLLLGTMVTGLASLLLLAGA) traverse the membrane as a helical segment. The Extracellular portion of the chain corresponds to 417–420 (QYLP). Residues 421–441 (GWTVLFLSVLGLLASRAVSAL) form a helical membrane-spanning segment. The Cytoplasmic segment spans residues 442 to 448 (SSLFAAE). The helical transmembrane segment at 449–469 (VFPTVIRGAGLGLVLGAGFLG) threads the bilayer. The Extracellular segment spans residues 470-483 (QAAGPLDTLHGRQG). A helical transmembrane segment spans residues 484 to 504 (FFLQQVVFASLAVLALLCVLL). Residues 505–556 (LPESRSRGLPQSLQDADRLRRSPLLRGRPRQDHLPLLPPSNSYWAGHTPEQH) are Cytoplasmic-facing. A disordered region spans residues 524-556 (RRSPLLRGRPRQDHLPLLPPSNSYWAGHTPEQH).

It belongs to the major facilitator (TC 2.A.1) superfamily. Organic cation transporter (TC 2.A.1.19) family.

Its subcellular location is the membrane. Organic anion transporter that mediates the uptake of ions. The chain is Putative solute carrier family 22 member 31 from Homo sapiens (Human).